The primary structure comprises 165 residues: Nucleotide-binding protein P9301_05061 (165 aa).

It belongs to the YajQ family.

Nucleotide-binding protein. This Prochlorococcus marinus (strain MIT 9301) protein is Nucleotide-binding protein P9301_05061.